Here is a 430-residue protein sequence, read N- to C-terminus: Enolase (430 aa).

Gln-163 contacts (2R)-2-phosphoglycerate. Residue Glu-205 is the Proton donor of the active site. Residues Asp-242, Glu-285, and Asp-312 each coordinate Mg(2+). Residues Lys-337, Arg-366, Ser-367, and Lys-388 each coordinate (2R)-2-phosphoglycerate. Residue Lys-337 is the Proton acceptor of the active site.

The protein belongs to the enolase family. Mg(2+) serves as cofactor.

It is found in the cytoplasm. It localises to the secreted. The protein resides in the cell surface. The enzyme catalyses (2R)-2-phosphoglycerate = phosphoenolpyruvate + H2O. Its pathway is carbohydrate degradation; glycolysis; pyruvate from D-glyceraldehyde 3-phosphate: step 4/5. Its function is as follows. Catalyzes the reversible conversion of 2-phosphoglycerate (2-PG) into phosphoenolpyruvate (PEP). It is essential for the degradation of carbohydrates via glycolysis. This chain is Enolase, found in Bifidobacterium animalis subsp. lactis (strain AD011).